A 211-amino-acid polypeptide reads, in one-letter code: Envelope protein UL45 homolog (211 aa).

Residues 1–46 lie on the Intravirion side of the membrane; that stretch reads MMSPTPEDDRDLVVVRGRLRMMDNGAEHDRERRSYTAWPHLCCGCT. A helical; Signal-anchor for type II membrane protein transmembrane segment spans residues 47–67; it reads IGIILTMFVIATTLLLASLFA. Residues 68–211 are Virion surface-facing; it reads FSYMSLESGT…SSILSNAIMK (144 aa). N-linked (GlcNAc...) asparagine; by host glycosylation is found at N96 and N133.

Belongs to the herpesviridae HHV-1 UL45 family.

It is found in the virion membrane. The sequence is that of Envelope protein UL45 homolog (UL45H) from Gallid herpesvirus 2 (strain bc-1) (GaHV-2).